The primary structure comprises 95 residues: Toxin Tbo-IT2 (95 aa).

A signal peptide spans 1–23 (MTMKTLCLSLIVIGVLILVAVKA). Positions 24-53 (EDYVNINSLEEAPEENVNINNLEETPEESR) are excised as a propeptide. Disulfide bonds link C54-C68, C61-C73, C67-C84, C70-C92, and C75-C82. Cysteine amide is present on C92.

The protein belongs to the neurotoxin 02 (plectoxin) family. 02 (plectoxin) subfamily. Expressed by the venom gland.

It localises to the secreted. Its function is as follows. This recombinant (non-amidated) toxin shows insecticidal activity on larvae of the housefly Musca domestica and has no activity on a panel of expressed neuronal receptors and ion channels. This is Toxin Tbo-IT2 from Tibellus oblongus (Oblong running crab spider).